We begin with the raw amino-acid sequence, 508 residues long: Ribonuclease Y (508 aa).

The helical transmembrane segment at 2–22 (IITALIAIAVGFLIGYLARKI) threads the bilayer. In terms of domain architecture, KH spans 198–261 (TVSVVTLPND…EVARIALEKL (64 aa)). The 94-residue stretch at 324 to 417 (VLKHSIEVAH…VQAADAISAA (94 aa)) folds into the HD domain.

It belongs to the RNase Y family.

Its subcellular location is the cell membrane. Its function is as follows. Endoribonuclease that initiates mRNA decay. This is Ribonuclease Y from Thermoanaerobacter pseudethanolicus (strain ATCC 33223 / 39E) (Clostridium thermohydrosulfuricum).